Consider the following 761-residue polypeptide: 1,2-alpha-glucosylglycerol phosphorylase (761 aa).

Residue 327-328 (YQ) coordinates glycerol. Residue 333–334 (WD) coordinates substrate. The active-site Proton donor is the glutamate 475. 587–588 (KQ) contacts substrate.

Belongs to the glycosyl hydrolase 65 family. As to quaternary structure, homodimer.

The enzyme catalyses 2-O-(alpha-D-glucopyranosyl)glycerol + phosphate = beta-D-glucose 1-phosphate + glycerol. Functionally, catalyzes both the (1) reversible phosphorolysis of 2-O-alpha-D-glucopyranosyl-sn-glycerol (GG) from beta-D-glucose 1-phosphate (betaGlc1P) and glycerol and (2) the hydrolysis of betaGlc1P. the betaGlc1P hydrolysis is a glucosyl-transfer reaction to an acceptor water molecule that produces an anomer-inverted alpha-glucose, not a phosphatase-type reaction. In the absence of glycerol produces alpha-D-glucopyranose and phosphate from beta-D-glucopyranose 1-phosphate. The protein is 1,2-alpha-glucosylglycerol phosphorylase of Bacillus selenitireducens (strain ATCC 700615 / DSM 15326 / MLS10).